The following is a 181-amino-acid chain: Copper-resistant cuproprotein CopI (181 aa).

An N-terminal signal peptide occupies residues 1–24 (MFPRRLLPASLIVLGVLFGASAQA). Cu(2+) is bound by residues His79, Cys163, His168, and Met173.

This sequence belongs to the CopI family.

The protein resides in the periplasm. In terms of biological role, involved in copper tolerance. In Pseudomonas aeruginosa (strain ATCC 15692 / DSM 22644 / CIP 104116 / JCM 14847 / LMG 12228 / 1C / PRS 101 / PAO1), this protein is Copper-resistant cuproprotein CopI.